Consider the following 240-residue polypeptide: uncharacterized protein (240 aa).

Basic residues predominate over residues 1 to 11 (MGMTPRRKRRG). Residues 1 to 32 (MGMTPRRKRRGGAVQITRPTGRPRTPTTQTTK) are disordered. The span at 17 to 31 (TRPTGRPRTPTTQTT) shows a compositional bias: low complexity. 6 helical membrane passes run 36 to 56 (WVVG…VELI), 93 to 113 (LMAN…AGLS), 115 to 135 (FVWA…LIGN), 146 to 166 (IGAS…GLFV), 172 to 192 (IVIG…AMPV), and 198 to 218 (GVSW…AYLL).

This sequence to M.leprae ML1171.

The protein localises to the cell membrane. This is an uncharacterized protein from Mycobacterium tuberculosis (strain CDC 1551 / Oshkosh).